A 221-amino-acid chain; its full sequence is Deoxyribose-phosphate aldolase (221 aa).

The Proton donor/acceptor role is filled by aspartate 89. The active-site Schiff-base intermediate with acetaldehyde is the lysine 151. The active-site Proton donor/acceptor is lysine 180.

It belongs to the DeoC/FbaB aldolase family. DeoC type 1 subfamily.

The protein resides in the cytoplasm. It carries out the reaction 2-deoxy-D-ribose 5-phosphate = D-glyceraldehyde 3-phosphate + acetaldehyde. It participates in carbohydrate degradation; 2-deoxy-D-ribose 1-phosphate degradation; D-glyceraldehyde 3-phosphate and acetaldehyde from 2-deoxy-alpha-D-ribose 1-phosphate: step 2/2. Catalyzes a reversible aldol reaction between acetaldehyde and D-glyceraldehyde 3-phosphate to generate 2-deoxy-D-ribose 5-phosphate. The chain is Deoxyribose-phosphate aldolase from Brevibacillus brevis (strain 47 / JCM 6285 / NBRC 100599).